The sequence spans 86 residues: Kappa-theraphotoxin-Cg1a 2 (86 aa).

Residues 1–21 form the signal peptide; it reads MKVSVVITLAVLGVMFVWASA. Residues 22–50 constitute a propeptide that is removed on maturation; sequence AELEERGSDQRDSPAWLKSMERIFQSEER. Intrachain disulfides connect C52/C66, C59/C71, and C65/C78. Phenylalanine amide is present on F84.

The protein belongs to the neurotoxin 10 (Hwtx-1) family. 28 (Jztx-11) subfamily. Expressed by the venom gland.

It localises to the secreted. Its function is as follows. This toxin acts as a voltage-dependent gating-modifier. It inhibits the sodium conductance (IC(50)=124 nM) and slows the fast inactivation (EC(50)=1180 nM) of Nav1.5/SCN5A. It significantly shifts the activation to more depolarized voltages and decreases the deactivation of Nav1.5 currents upon extreme depolarization, but only slightly affects voltage-dependence of steady-state inactivation. In addition, this toxin causes an approximately five-fold decrease in the rate of recovery from inactivation and an approximately 1.9-fold reduction in the closed-state inactivation rate. This toxin integrates the functions of site 3 toxins (alpha-scorpion toxins) with site 4 toxins (beta-scorpion and spider toxins) by targeting multiple sites on Nav1.5. Also shows inhibition of voltage-gated potassium channels (5 uM completely inhibits Kv2.1/KCNB1, whereas 5 uM moderately inhibits Kv4.2/KCND2 Kv4.1/KCND1 channels). This Chilobrachys guangxiensis (Chinese earth tiger tarantula) protein is Kappa-theraphotoxin-Cg1a 2.